A 212-amino-acid chain; its full sequence is Ras-related protein Rab-15 (212 aa).

10 residues coordinate GTP: Ser-17, Gly-18, Val-19, Gly-20, Lys-21, Thr-22, Cys-23, Ser-35, Ser-39, and Thr-40. Thr-22 lines the Mg(2+) pocket. 2 short sequence motifs (switch) span residues 31–45 (NEFHSSHISTIGVDF) and 63–80 (DTAGQERYQTITKQYYRR). Thr-40 and Asp-63 together coordinate Mg(2+). Gly-66, Asn-121, Lys-122, Asp-124, Ser-151, and Ala-152 together coordinate GTP. The disordered stretch occupies residues 192–212 (ELEEDEGKPEGPANSSKTCWC). S-geranylgeranyl cysteine attachment occurs at residues Cys-210 and Cys-212. Cysteine methyl ester is present on Cys-212.

It belongs to the small GTPase superfamily. Rab family. As to quaternary structure, the GTP bound form of RAB15 interacts with REP15. Interacts (GTP-bound form) with MICAL1, MICAL3, MICALCL, EHBP1 and EHBP1L1. Mg(2+) serves as cofactor.

The protein localises to the cell membrane. It carries out the reaction GTP + H2O = GDP + phosphate + H(+). Its activity is regulated as follows. Regulated by guanine nucleotide exchange factors (GEFs) which promote the exchange of bound GDP for free GTP. Regulated by GTPase activating proteins (GAPs) which increase the GTP hydrolysis activity. Inhibited by GDP dissociation inhibitors (GDIs). In terms of biological role, the small GTPases Rab are key regulators of intracellular membrane trafficking, from the formation of transport vesicles to their fusion with membranes. Rabs cycle between an inactive GDP-bound form and an active GTP-bound form that is able to recruit to membranes different sets of downstream effectors directly responsible for vesicle formation, movement, tethering and fusion. RAB15 may act in concert with RAB3A in regulating aspects of synaptic vesicle membrane flow within the nerve terminal. This Bos taurus (Bovine) protein is Ras-related protein Rab-15 (RAB15).